Reading from the N-terminus, the 119-residue chain is Beta-2-microglobulin (119 aa).

Positions 1 to 20 (MARSVVVALLVLLSLSGLEA) are cleaved as a signal peptide. Residues 25-114 (PKIQVYSRHP…VTFPTPKTVK (90 aa)) enclose the Ig-like C1-type domain. C45 and C100 are disulfide-bonded.

The protein belongs to the beta-2-microglobulin family. As to quaternary structure, heterodimer of an alpha chain and a beta chain. Beta-2-microglobulin is the beta-chain of major histocompatibility complex class I molecules.

Its subcellular location is the secreted. Functionally, component of the class I major histocompatibility complex (MHC). Involved in the presentation of peptide antigens to the immune system. The sequence is that of Beta-2-microglobulin (B2M) from Lagothrix lagotricha (Brown woolly monkey).